Here is a 318-residue protein sequence, read N- to C-terminus: Very-long-chain 3-oxoacyl-CoA reductase-B (318 aa).

The chain crosses the membrane as a helical span at residues 15-35 (FWYLGVVAATWWGLRAAWCLL). 54-83 (GKWAVVTGATDGIGKAYAEELARRGMNIVL) is a binding site for NADP(+). 2 helical membrane passes run 187-207 (GVVLNISSASGMYPVPLLTVY) and 281-301 (AITGWISTSLVPVSAAISMGM). S194 serves as a coordination point for substrate. Y207 acts as the Proton acceptor in catalysis.

The protein belongs to the short-chain dehydrogenases/reductases (SDR) family. 17-beta-HSD 3 subfamily.

Its subcellular location is the endoplasmic reticulum membrane. It carries out the reaction a very-long-chain (3R)-3-hydroxyacyl-CoA + NADP(+) = a very-long-chain 3-oxoacyl-CoA + NADPH + H(+). It catalyses the reaction 17beta-estradiol + NAD(+) = estrone + NADH + H(+). The enzyme catalyses 17beta-estradiol + NADP(+) = estrone + NADPH + H(+). Its pathway is lipid metabolism; fatty acid biosynthesis. The protein operates within steroid biosynthesis; estrogen biosynthesis. In terms of biological role, catalyzes the second of the four reactions of the long-chain fatty acids elongation cycle. This endoplasmic reticulum-bound enzymatic process, allows the addition of two carbons to the chain of long- and very long-chain fatty acids/VLCFAs per cycle. This enzyme has a 3-ketoacyl-CoA reductase activity, reducing 3-ketoacyl-CoA to 3-hydroxyacyl-CoA, within each cycle of fatty acid elongation. Thereby, it may participate in the production of VLCFAs of different chain lengths that are involved in multiple biological processes as precursors of membrane lipids and lipid mediators. May also catalyze the transformation of estrone (E1) into estradiol (E2) and play a role in estrogen formation. This is Very-long-chain 3-oxoacyl-CoA reductase-B (hsd17b12-b) from Xenopus laevis (African clawed frog).